We begin with the raw amino-acid sequence, 806 residues long: Lon protease 1 (806 aa).

Residues 31–235 (VPLIAVPSHP…KVLELIYEEL (205 aa)) form the Lon N-terminal domain. Position 389 to 396 (389 to 396 (GPPGVGKT)) interacts with ATP. One can recognise a Lon proteolytic domain in the interval 626-806 (AMYSGMVMGL…NMREVIKLLF (181 aa)). Active-site residues include Ser714 and Lys757.

The protein belongs to the peptidase S16 family. In terms of assembly, homohexamer. Organized in a ring with a central cavity.

It is found in the cytoplasm. It carries out the reaction Hydrolysis of proteins in presence of ATP.. ATP-dependent serine protease that mediates the selective degradation of mutant and abnormal proteins as well as certain short-lived regulatory proteins. Required for cellular homeostasis and for survival from DNA damage and developmental changes induced by stress. Degrades polypeptides processively to yield small peptide fragments that are 5 to 10 amino acids long. Binds to DNA in a double-stranded, site-specific manner. The polypeptide is Lon protease 1 (Borreliella burgdorferi (strain ATCC 35210 / DSM 4680 / CIP 102532 / B31) (Borrelia burgdorferi)).